We begin with the raw amino-acid sequence, 1234 residues long: Protein Jumonji (1234 aa).

Over residues 1–11 (MSKERPKRNII) the composition is skewed to basic residues. 4 disordered regions span residues 1–22 (MSKE…DGIP), 68–150 (AKAL…LSKR), 169–339 (LPNS…VKYT), and 354–548 (RELV…GKSG). Phosphoserine is present on S78. A compositionally biased stretch (low complexity) spans 86-98 (SQVSSTSNDVSSS). The short motif at 104-110 (PSRKRPR) is the Nuclear localization signal element. Polar residues predominate over residues 117 to 129 (FAQSQPNSPSTTP). The sufficient for interaction with the PRC2 complex stretch occupies residues 141 to 170 (ATQISDLSKRKPKTEDFLTFLCLRGSPALP). Residues 180–193 (QDEEDVEEEDDETE) are compositionally biased toward acidic residues. Over residues 197 to 210 (ATTNNASSSCQSTP) the composition is skewed to polar residues. The span at 211 to 221 (RKGKTHKHVHN) shows a compositional bias: basic residues. Positions 244 to 264 (KEATPGKEKHSEPRADSRREQ) are enriched in basic and acidic residues. The span at 265–285 (ASGAQPTAASAAASSAKGLAA) shows a compositional bias: low complexity. 2 stretches are compositionally biased toward polar residues: residues 304 to 322 (SKVN…TNSA) and 369 to 384 (SAVN…SSNA). K378 carries the N6-acetyllysine modification. Over residues 418–440 (CTKEVGGRQLREGLRNSKRRLEE) the composition is skewed to basic and acidic residues. At S449 the chain carries Phosphoserine. 2 stretches are compositionally biased toward basic and acidic residues: residues 482–494 (VKKE…LERN) and 529–544 (SSHK…EKGS). In terms of domain architecture, JmjN spans 555-596 (IPVLRPSAKEFHDPLIYIESVRAQVEKYGMCRVIPPPDWRPE). The ARID domain maps to 619 to 711 (WGPNVQRLAC…YLLSYDSLSP (93 aa)). A GSGFP motif motif is present at residues 872 to 876 (GSGFP). The JmjC domain maps to 882–1046 (PFSRHGWNLT…MGFETAKEMK (165 aa)). The tract at residues 1206 to 1234 (ENCLNKPTPKRGPRKRATVDVPPSRLPSS) is disordered.

It belongs to the JARID2 family. As to quaternary structure, associates with the PRC2 complex, which consists of the core components EED, EZH1 or EZH2, SUZ12, and RBBP4, and various combinations of accessory subunits including AEBP2, JARID2, PHF19, MTF2 and EPOP. Found in a monomeric PRC2.2 (class 2) complex consisting of at least SUZ12, RBBP4, AEBP2 and JARID2. Facilitates nucleosome binding of the PRC2 complex. Interacts with SUZ12 (via C2H2-type zinc finger domain); the interaction is direct; competes with EPOP for SUZ12 binding. Interacts with histone methyltransferases EHMT1/GLP1 and EHMT2/G9a. Interacts with GATA4 (via the N-terminal region). Interacts with NKX2-5 (via the C-terminal region). Interacts with RB1. Interacts with ZNF496. Interacts with ESRRB. Interacts with DDX18; this interaction inhibits the PRC2 complex. In terms of tissue distribution, widely expressed in embryos. In adults, expressed at high levels in heart, skeletal muscle, brain and thymus.

Its subcellular location is the nucleus. Functionally, regulator of histone methyltransferase complexes that plays an essential role in embryonic development, including heart and liver development, neural tube fusion process and hematopoiesis. Acts as an accessory subunit for the core PRC2 (Polycomb repressive complex 2) complex, which mediates histone H3K27 (H3K27me3) trimethylation on chromatin. Binds DNA and mediates the recruitment of the PRC2 complex to target genes in embryonic stem cells, thereby playing a key role in stem cell differentiation and normal embryonic development. In cardiac cells, it is required to repress expression of cyclin-D1 (CCND1) by activating methylation of 'Lys-9' of histone H3 (H3K9me) by the GLP1/EHMT1 and G9a/EHMT2 histone methyltransferases. Also acts as a transcriptional repressor of ANF via its interaction with GATA4 and NKX2-5. Participates in the negative regulation of cell proliferation signaling. Does not have histone demethylase activity. The polypeptide is Protein Jumonji (Jarid2) (Mus musculus (Mouse)).